The following is a 192-amino-acid chain: Signal peptidase complex catalytic subunit sec11 (192 aa).

The Cytoplasmic segment spans residues 1–18 (MLSFLSSNLSSTRQSMAQ). Residues 19-39 (VLNFALVLSTAFMLWKGLSVF) form a helical; Signal-anchor for type II membrane protein membrane-spanning segment. Topologically, residues 40-192 (TASSSPIVVV…GLMVILQREQ (153 aa)) are lumenal. Active-site charge relay system residues include S53, H92, and D133. The interval 177–188 (VLLGIMGLMVIL) is C-terminal short (CTS) helix.

The protein belongs to the peptidase S26B family. In terms of assembly, component of the signal peptidase complex (SPC) composed of a catalytic subunit SEC11 and three accessory subunits SPC1, SPC2 and SPC3. The complex induces a local thinning of the ER membrane which is used to measure the length of the signal peptide (SP) h-region of protein substrates. This ensures the selectivity of the complex towards h-regions shorter than 18-20 amino acids. SPC associates with the translocon complex.

The protein resides in the endoplasmic reticulum membrane. The catalysed reaction is Cleavage of hydrophobic, N-terminal signal or leader sequences from secreted and periplasmic proteins.. Its function is as follows. Catalytic component of the signal peptidase complex (SPC) which catalyzes the cleavage of N-terminal signal sequences from nascent proteins as they are translocated into the lumen of the endoplasmic reticulum. Specifically cleaves N-terminal signal peptides that contain a hydrophobic alpha-helix (h-region) shorter than 18-20 amino acids. This is Signal peptidase complex catalytic subunit sec11 (sec11) from Aspergillus fumigatus (strain CBS 144.89 / FGSC A1163 / CEA10) (Neosartorya fumigata).